We begin with the raw amino-acid sequence, 118 residues long: MARAQLVLVALVAAALLLAGPHTTMAAISCGQVNSAVSPCLSYARGGSGPSAACCSGVRSLNSAASTTADRRTACNCLKNVAGSISGLNAGNAASIPSKCGVSIPYTISPSIDCSSVN.

Residues 1-26 (MARAQLVLVALVAAALLLAGPHTTMA) form the signal peptide. Disulfide bonds link Cys-30–Cys-77, Cys-40–Cys-54, Cys-55–Cys-100, and Cys-75–Cys-114.

This sequence belongs to the plant LTP family.

In terms of biological role, plant non-specific lipid-transfer proteins transfer phospholipids as well as galactolipids across membranes. May play a role in wax or cutin deposition in the cell walls of expanding epidermal cells and certain secretory tissues. This Oryza sativa subsp. japonica (Rice) protein is Non-specific lipid-transfer protein 2A (LTP2-A).